The following is a 309-amino-acid chain: L-aminoadipate-semialdehyde dehydrogenase-phosphopantetheinyl transferase (309 aa).

CoA-binding positions include Arg-47, 86–91 (RTAKGK), and 108–111 (NISH). Residues Asp-129 and Glu-181 each coordinate Mg(2+). 181 to 185 (ESFIK) contributes to the CoA binding site. Ser-258 is modified (phosphoserine).

This sequence belongs to the P-Pant transferase superfamily. AcpS family. In terms of assembly, monomer. Mg(2+) serves as cofactor. Detected in heart, skeletal muscle, placenta, testis, brain, pancreas, liver and kidney.

It localises to the cytoplasm. Its subcellular location is the cytosol. The enzyme catalyses apo-[ACP] + CoA = holo-[ACP] + adenosine 3',5'-bisphosphate + H(+). The catalysed reaction is apo-[ACP] + acetyl-CoA = acetyl-[ACP] + adenosine 3',5'-bisphosphate + H(+). In terms of biological role, catalyzes the post-translational modification of target proteins by phosphopantetheine. Can transfer the 4'-phosphopantetheine moiety from coenzyme A, regardless of whether the CoA is presented in the free thiol form or as an acetyl thioester, to a serine residue of a broad range of acceptors including the acyl carrier domain of FASN. The sequence is that of L-aminoadipate-semialdehyde dehydrogenase-phosphopantetheinyl transferase (AASDHPPT) from Homo sapiens (Human).